We begin with the raw amino-acid sequence, 2475 residues long: Gellan lyase (2475 aa).

Positions 1 to 35 (MRFSWKKLVSAALVMALLVGIVYPAASGRGAVASA) are cleaved as a signal peptide. The Fibronectin type-III domain maps to 623-708 (APANVQVAIS…QPATATSPGE (86 aa)). A NodB homology domain is found at 1295–1518 (GAFSLTIDDN…RDQIWVGRYG (224 aa)). Residues 2111–2223 (QPGQQLELTV…VSTAVSLSDF (113 aa)) enclose the Cohesin domain.

Subject to proteolytic processing after secretion. Cleavage occurs between Gly-1205 and Leu-1206. This gives rise to a N-terminal gellan lyase of 130 kDa being the mature form of the gellan lyase. The function of C-terminal gellan lyase is not known.

The protein resides in the secreted. The catalysed reaction is Eliminative cleavage of beta-D-glucopyranosyl-(1-&gt;4)-beta-D-glucopyranosyluronate bonds of gellan backbone releasing tetrasaccharides containing a 4-deoxy-4,5-unsaturated D-glucopyranosyluronic acid at the non-reducing end. The tetrasaccharide produced from deacetylated gellan is beta-D-4-deoxy-Delta(4)-GlcAp-(1-&gt;4)-beta-D-Glcp-(1-&gt;4)-alpha-L-Rhap-(1-&gt;3)-beta-D-Glcp.. Cleaves the glycosidic bonds of gellan backbone and releases tetrasaccharide units of glucuronyl-glucosyl-rhamnosyl-glucose with unsaturated glucuronic acid at the non-reducing terminal. The enzyme is highly specific to the heteropolysaccharide gellan, especially deacetylated gellan. This chain is Gellan lyase, found in Bacillus sp.